Here is a 200-residue protein sequence, read N- to C-terminus: Eukaryotic translation initiation factor isoform 4E (200 aa).

Residues 1 to 22 are disordered; the sequence is MATEAPIEATEVPPASATETVA. MRNA is bound by residues 44–49, Lys-76, and 94–95; these read QGAAWG and WE. Cys-99 and Cys-138 are joined by a disulfide. MRNA contacts are provided by residues 145–150 and 189–192; these read RRSQDK and KRER.

Belongs to the eukaryotic initiation factor 4E family. EIF4F is a multi-subunit complex, the composition of which varies with external and internal environmental conditions. It is composed of at least EIF4A, EIF4E and EIF4G. EIF4E is also known to interact with other partners. In higher plants two isoforms of EIF4F have been identified, named isoform EIF4F and isoform EIF(iso)4F. Isoform EIF4F has subunits p220 and p26, whereas isoform EIF(iso)4F has subunits p82 and p28. In terms of assembly, (Microbial infection) Interacts with viral genome-linked protein (VPg); this interaction is possible in susceptible hosts but impaired in resistant plants. In terms of processing, according to the redox status, the Cys-99-Cys-138 disulfide bridge may have a role in regulating protein function by affecting its ability to bind capped mRNA. As to expression, expressed ubiquitously in seedlings, roots, leaves, sepals, petals, anthers and dehisced pollen, with highest levels in pollen, maturing anthers and roots. Strongly expressed in susceptible plants but not in resistant ones.

Its subcellular location is the cytoplasm. The protein resides in the nucleus. Its function is as follows. Component of the protein complex eIF4F, which is involved in the recognition of the mRNA cap, ATP-dependent unwinding of 5'-terminal secondary structure and recruitment of mRNA to the ribosome. Recognizes and binds the 7-methylguanosine-containing mRNA cap during an early step in the initiation of protein synthesis and facilitates ribosome binding by inducing the unwinding of the mRNAs secondary structures. Key component of recessive resistance to potyviruses. Functionally, (Microbial infection) Susceptibility host factor required for viral infection (e.g. potato virus Y (PVY) and pepper mottle virus (PepMoV)) by recruiting viral RNAs to the host ribosomal complex via an interaction with viral genome-linked protein (VPg). This Nicotiana tabacum (Common tobacco) protein is Eukaryotic translation initiation factor isoform 4E.